Reading from the N-terminus, the 383-residue chain is MQTWQLPEHIADVLPTNARQLESAREQLLALFRVHGYELVQPPLMEYAHSLLTHIDAGLSLKTILVTDRLSGRQLGIRADITPQVARIDAHLLSANQGINRLCYAGPVLHAQPDGLPNMREPLQAGAEMYGFADIRGDIELIDLMLKSMKIADMGKVLLSLGHIGIFRALSDAAHLDAGQSATLLALMQDKDTGSVEAQVKAWKLDGMWAKAFSLLPRLYGGREVLSDARGRLPDLSAVGGALDELQAVCDAFPDNEIHIDLSELRVDNYHTGLLYAAYAADFHDAVARGGRYDGLGGYFGRARPATGFSFDLRSFIGRLPAVERQPAVLVDAEDAEAAREAVEALREQGQCVVIDYGIGHNVSEELAGRLKKTDGVWQIVKR.

Belongs to the class-II aminoacyl-tRNA synthetase family. HisZ subfamily. Heteromultimer composed of HisG and HisZ subunits.

Its subcellular location is the cytoplasm. Its pathway is amino-acid biosynthesis; L-histidine biosynthesis; L-histidine from 5-phospho-alpha-D-ribose 1-diphosphate: step 1/9. In terms of biological role, required for the first step of histidine biosynthesis. May allow the feedback regulation of ATP phosphoribosyltransferase activity by histidine. This Neisseria gonorrhoeae (strain NCCP11945) protein is ATP phosphoribosyltransferase regulatory subunit.